The following is a 128-amino-acid chain: Glycine cleavage system H protein (128 aa).

Residues 22 to 104 (TALVGVTDYA…YASGWLVKIK (83 aa)) enclose the Lipoyl-binding domain. Residue lysine 63 is modified to N6-lipoyllysine.

It belongs to the GcvH family. In terms of assembly, the glycine cleavage system is composed of four proteins: P, T, L and H. The cofactor is (R)-lipoate.

Functionally, the glycine cleavage system catalyzes the degradation of glycine. The H protein shuttles the methylamine group of glycine from the P protein to the T protein. The protein is Glycine cleavage system H protein of Halothermothrix orenii (strain H 168 / OCM 544 / DSM 9562).